The chain runs to 383 residues: Na(+)/H(+) antiporter NhaA (383 aa).

A run of 11 helical transmembrane segments spans residues 14-34 (AGGI…NSPL), 47-67 (FGMS…FLLI), 87-107 (IFPA…YVAF), 117-137 (GWAI…ALLG), 146-166 (VFLL…IALF), 171-191 (LSSM…MLNA), 205-225 (AILW…GVVI), 252-272 (VAFG…LEGV), 280-300 (MLPL…IFSF), 321-341 (IFAV…ISSL), and 356-376 (LGIL…LHFS).

Belongs to the NhaA Na(+)/H(+) (TC 2.A.33) antiporter family.

It localises to the cell inner membrane. The catalysed reaction is Na(+)(in) + 2 H(+)(out) = Na(+)(out) + 2 H(+)(in). The enzyme catalyses Li(+)(in) + 2 H(+)(out) = Li(+)(out) + 2 H(+)(in). Its activity is regulated as follows. Activity is regulated by pH. Active at alkaline pH. Amiloride strongly reduces affinity for Na(+), but does not change the Vmax. In terms of biological role, na(+)/H(+) antiporter that extrudes sodium in exchange for external protons. Can also transport lithium and potassium. The polypeptide is Na(+)/H(+) antiporter NhaA (Vibrio parahaemolyticus serotype O3:K6 (strain RIMD 2210633)).